Reading from the N-terminus, the 188-residue chain is Mediator of RNA polymerase II transcription subunit 11 (188 aa).

Residues 46–72 (KNKMEDNANNFKKLITQVENELSAQMQ) adopt a coiled-coil conformation. The tract at residues 116–188 (DPTSDEPQTT…MTDDDDDMEQ (73 aa)) is disordered. The span at 123 to 141 (QTTEEDEEDGSDDLNEDGA) shows a compositional bias: acidic residues. Residues 146–155 (SSTVTSSTTD) show a composition bias toward low complexity. The span at 171 to 180 (SQEESGRQMT) shows a compositional bias: basic and acidic residues.

The protein belongs to the Mediator complex subunit 11 family. As to quaternary structure, component of the Mediator complex.

The protein localises to the nucleus. Functionally, component of the Mediator complex, a coactivator involved in the regulated transcription of nearly all RNA polymerase II-dependent genes. Mediator functions as a bridge to convey information from gene-specific regulatory proteins to the basal RNA polymerase II transcription machinery. Mediator is recruited to promoters by direct interactions with regulatory proteins and serves as a scaffold for the assembly of a functional pre-initiation complex with RNA polymerase II and the general transcription factors. The protein is Mediator of RNA polymerase II transcription subunit 11 (mdt-11) of Caenorhabditis elegans.